We begin with the raw amino-acid sequence, 67 residues long: Large ribosomal subunit protein bL35 (67 aa).

Basic residues predominate over residues 1–16 (MPKMKTKKSAAKRFRV). The segment at 1–22 (MPKMKTKKSAAKRFRVRPGGTV) is disordered.

It belongs to the bacterial ribosomal protein bL35 family.

This Methylibium petroleiphilum (strain ATCC BAA-1232 / LMG 22953 / PM1) protein is Large ribosomal subunit protein bL35.